Consider the following 178-residue polypeptide: MLPSGKSIRILGIDPGLRITGFGVIEKNGSQLTYLGSGCVVTEKSGLPDRLKTILDGLNEIILQHQPEQVAVEQVFVNINPKSTLLLGQARGAAISAAVLHELSVYEYTALQIKQSVVGNGHARKEQVQEMVMRLLRLGERPRPDAADALACAICHAHGGTGLLALSVRNHLKRGGCP.

Catalysis depends on residues Asp-14, Glu-73, and Asp-145. Mg(2+) contacts are provided by Asp-14, Glu-73, and Asp-145.

The protein belongs to the RuvC family. As to quaternary structure, homodimer which binds Holliday junction (HJ) DNA. The HJ becomes 2-fold symmetrical on binding to RuvC with unstacked arms; it has a different conformation from HJ DNA in complex with RuvA. In the full resolvosome a probable DNA-RuvA(4)-RuvB(12)-RuvC(2) complex forms which resolves the HJ. It depends on Mg(2+) as a cofactor.

Its subcellular location is the cytoplasm. The enzyme catalyses Endonucleolytic cleavage at a junction such as a reciprocal single-stranded crossover between two homologous DNA duplexes (Holliday junction).. Functionally, the RuvA-RuvB-RuvC complex processes Holliday junction (HJ) DNA during genetic recombination and DNA repair. Endonuclease that resolves HJ intermediates. Cleaves cruciform DNA by making single-stranded nicks across the HJ at symmetrical positions within the homologous arms, yielding a 5'-phosphate and a 3'-hydroxyl group; requires a central core of homology in the junction. The consensus cleavage sequence is 5'-(A/T)TT(C/G)-3'. Cleavage occurs on the 3'-side of the TT dinucleotide at the point of strand exchange. HJ branch migration catalyzed by RuvA-RuvB allows RuvC to scan DNA until it finds its consensus sequence, where it cleaves and resolves the cruciform DNA. The chain is Crossover junction endodeoxyribonuclease RuvC from Nitrosomonas eutropha (strain DSM 101675 / C91 / Nm57).